Reading from the N-terminus, the 248-residue chain is Aspartate/glutamate leucyltransferase (248 aa).

It belongs to the R-transferase family. Bpt subfamily.

The protein resides in the cytoplasm. It carries out the reaction N-terminal L-glutamyl-[protein] + L-leucyl-tRNA(Leu) = N-terminal L-leucyl-L-glutamyl-[protein] + tRNA(Leu) + H(+). It catalyses the reaction N-terminal L-aspartyl-[protein] + L-leucyl-tRNA(Leu) = N-terminal L-leucyl-L-aspartyl-[protein] + tRNA(Leu) + H(+). Its function is as follows. Functions in the N-end rule pathway of protein degradation where it conjugates Leu from its aminoacyl-tRNA to the N-termini of proteins containing an N-terminal aspartate or glutamate. This Methylobacterium sp. (strain 4-46) protein is Aspartate/glutamate leucyltransferase.